A 293-amino-acid chain; its full sequence is ATP synthase subunit a (293 aa).

6 helical membrane passes run 40-60, 98-118, 151-171, 188-208, 225-245, and 264-284; these read DSLFWSGLMGLIVIFCLWLAA, FVAPLALTVFLWIILMNALDL, DLNVPMGMSLGVLLLMFYYGI, FHAHGLAALVLAPFNLLLNLI, MFAGELIFMLIALLGGAWTGF, and AIFHILIVLLQAFIFMMLTLV.

It belongs to the ATPase A chain family. In terms of assembly, F-type ATPases have 2 components, CF(1) - the catalytic core - and CF(0) - the membrane proton channel. CF(1) has five subunits: alpha(3), beta(3), gamma(1), delta(1), epsilon(1). CF(0) has three main subunits: a(1), b(2) and c(9-12). The alpha and beta chains form an alternating ring which encloses part of the gamma chain. CF(1) is attached to CF(0) by a central stalk formed by the gamma and epsilon chains, while a peripheral stalk is formed by the delta and b chains.

It localises to the cell inner membrane. Key component of the proton channel; it plays a direct role in the translocation of protons across the membrane. The polypeptide is ATP synthase subunit a (Bordetella avium (strain 197N)).